Reading from the N-terminus, the 498-residue chain is Probable dipeptidase B (498 aa).

Residue C26 is part of the active site.

Belongs to the peptidase C69 family.

The catalysed reaction is an L-aminoacyl-L-amino acid + H2O = 2 an L-alpha-amino acid. The chain is Probable dipeptidase B (pepDB) from Streptococcus pyogenes serotype M1.